Consider the following 334-residue polypeptide: Chorismatase (334 aa).

Substrate is bound by residues Tyr-143, Arg-150, Tyr-203, and Arg-216. Residue Glu-328 is the Proton acceptor of the active site.

The protein belongs to the FkbO/Hyg5 family. In terms of assembly, monomer.

The catalysed reaction is chorismate + H2O = (3R,4R)-3,4-dihydroxy-3,4-dihydrobenzoate + pyruvate. Involved in the biosynthesis of the macrocyclic amino acid-linked polyketides rapamycin which is a potent immunosuppressant that prevents T-cell proliferation through initial binding to the immunophilin FKBP12. Catalyzes the hydrolysis of chorismate via a 1,4-conjugate elimination of water to yield (4R,5R)-4,5-dihydroxycyclohexa-1,5-dienecarboxylic acid (DCDC). This is Chorismatase (rapK) from Streptomyces rapamycinicus (strain ATCC 29253 / DSM 41530 / NRRL 5491 / AYB-994) (Streptomyces hygroscopicus (strain ATCC 29253)).